The chain runs to 209 residues: Thymidylate kinase (209 aa).

11–18 (GIEGAGKT) provides a ligand contact to ATP.

It belongs to the thymidylate kinase family.

The catalysed reaction is dTMP + ATP = dTDP + ADP. In terms of biological role, phosphorylation of dTMP to form dTDP in both de novo and salvage pathways of dTTP synthesis. This is Thymidylate kinase (tmk) from Pasteurella multocida (strain Pm70).